The chain runs to 294 residues: ATP synthase gamma chain (294 aa).

It belongs to the ATPase gamma chain family. F-type ATPases have 2 components, CF(1) - the catalytic core - and CF(0) - the membrane proton channel. CF(1) has five subunits: alpha(3), beta(3), gamma(1), delta(1), epsilon(1). CF(0) has three main subunits: a, b and c.

It is found in the cell inner membrane. Its function is as follows. Produces ATP from ADP in the presence of a proton gradient across the membrane. The gamma chain is believed to be important in regulating ATPase activity and the flow of protons through the CF(0) complex. The chain is ATP synthase gamma chain from Paraburkholderia xenovorans (strain LB400).